A 3948-amino-acid chain; its full sequence is Equisetin synthetase eqxS (3948 aa).

Positions 4–438 constitute a Ketosynthase family 3 (KS3) domain; the sequence is SEPIAVIGSA…GTNAHAIIEA (435 aa). Active-site for beta-ketoacyl synthase activity residues include cysteine 177, histidine 316, and histidine 358. Residues 543 to 847 form a malonyl-CoA:ACP transacylase (MAT) domain region; sequence IFTGQGTQWP…DTIEAISEGR (305 aa). The interval 931 to 1066 is N-terminal hotdog fold; that stretch reads HPLLGRRCHD…AQIKASLGAP (136 aa). A dehydratase (DH) domain region spans residues 931 to 1233; that stretch reads HPLLGRRCHD…MELVPFSPAT (303 aa). Positions 931 to 1235 constitute a PKS/mFAS DH domain; sequence HPLLGRRCHD…LVPFSPATPA (305 aa). Residue histidine 964 is the Proton acceptor; for dehydratase activity of the active site. The segment at 1081–1235 is C-terminal hotdog fold; it reads LRPVSVDRFY…LVPFSPATPA (155 aa). Catalysis depends on aspartate 1141, which acts as the Proton donor; for dehydratase activity. Positions 1376–1574 are methyltransferase (MT) domain; that stretch reads MLQDVYEQGF…GIDTTTPPVH (199 aa). The interval 2105–2277 is ketoreductase (KR) domain; it reads TFLLVGLTGE…VAASSIDISS (173 aa). Positions 2389–2464 constitute a Carrier 1 domain; the sequence is AIIKESFIVR…DLVDECLDLL (76 aa). Serine 2424 is subject to O-(pantetheine 4'-phosphoryl)serine. The segment at 2480–2553 is disordered; sequence QAAKPTTVIP…NSTDILAPPR (74 aa). Composition is skewed to polar residues over residues 2487–2505 and 2513–2528; these read VIPQTPTRVTPPESSQGTS and GSDSSHSPIGTPLTSW. A compositionally biased stretch (basic and acidic residues) spans 2529–2541; it reads DRQDSSPPDKSDD. The condensation (C) domain stretch occupies residues 2564–2991; the sequence is SYGQAGFWFL…IRGSDKTVDA (428 aa). Residues 3026 to 3424 are adenylation (A) (KR) domain; that stretch reads QVIQDNPDNI…DGLLFCDGRL (399 aa). In terms of domain architecture, Carrier 2 spans 3540–3617; that stretch reads EILTPSEQRL…AMAGVLEDCG (78 aa). Residue serine 3577 is modified to O-(pantetheine 4'-phosphoryl)serine. A reductase (RED) domain region spans residues 3653–3870; that stretch reads LTGSSGYLGR…MPVNEVVEAI (218 aa).

This sequence in the C-terminal section; belongs to the NRP synthetase family.

The catalysed reaction is L-serine + 7 malonyl-CoA + acetyl-CoA + 2 S-adenosyl-L-methionine + ATP + 8 NADPH + 11 H(+) = (5S)-3-[(2E,6R,8E,10E,12E)-2,6-dimethyltetradeca-2,8,10,12-tetraenoyl]-5-(hydroxymethyl)pyrrolidine-2,4-dione + AMP + 2 S-adenosyl-L-homocysteine + 7 CO2 + diphosphate + 8 NADP(+) + 8 CoA + 6 H2O. It participates in mycotoxin biosynthesis. Hybrid PKS-NRPS synthetase; part of the gene cluster that mediates the biosynthesis of equisetin, a trans-fused decalin-containing tetramic acid with antimicrobial activity. The PKS module of eqxS together with the enoylreductase eqxC catalyze the formation of the polyketide unit which is then conjugated to L-serine by the condensation domain of the eqxS NRPS module. Activity of the Dieckmann cyclase domain (RED) results in release of the Dieckmann product intermediate. Diels-Alderase eqx3 is involved in endo-selective Diels-Alder cycloaddition to form the decalin ring, leading to the production of N-desmethylequisetin also called trichosetin. Subsequent N-methylation is carried out by eqxD to give equisetin. This chain is Equisetin synthetase eqxS, found in Fusarium heterosporum.